A 541-amino-acid chain; its full sequence is Chaperonin GroEL 2 (541 aa).

ATP contacts are provided by residues 29-32, 86-90, G413, 478-480, and D494; these read TLGP, DGTTT, and NAA.

It belongs to the chaperonin (HSP60) family. As to quaternary structure, forms a cylinder of 14 subunits composed of two heptameric rings stacked back-to-back. Interacts with the co-chaperonin GroES.

It is found in the cytoplasm. It carries out the reaction ATP + H2O + a folded polypeptide = ADP + phosphate + an unfolded polypeptide.. In terms of biological role, together with its co-chaperonin GroES, plays an essential role in assisting protein folding. The GroEL-GroES system forms a nano-cage that allows encapsulation of the non-native substrate proteins and provides a physical environment optimized to promote and accelerate protein folding. The protein is Chaperonin GroEL 2 of Corynebacterium jeikeium (strain K411).